The sequence spans 180 residues: uncharacterized protein (180 aa).

The Macro domain occupies 1 to 180 (MVEFEIVKGD…KDYERALRAV (180 aa)).

This is an uncharacterized protein from Thermococcus kodakarensis (strain ATCC BAA-918 / JCM 12380 / KOD1) (Pyrococcus kodakaraensis (strain KOD1)).